Here is a 471-residue protein sequence, read N- to C-terminus: Iroquois-class homeodomain protein IRX-2 (471 aa).

Residues 112 to 175 (LNDPAYRKNA…ANARRRLKKE (64 aa)) constitute a DNA-binding region (homeobox; TALE-type). Disordered regions lie at residues 176–373 (NKMT…SPYP) and 424–471 (APKA…QPYL). S186 is subject to Phosphoserine. Positions 195–209 (DATRSKDESPDKAQE) are enriched in basic and acidic residues. The segment covering 261–273 (DDLEDDEDDDEEG) has biased composition (acidic residues). A compositionally biased stretch (low complexity) spans 355 to 367 (PAAAAPASTGAPP). Residues 462-471 (VVGGGVQPYL) are compositionally biased toward gly residues.

This sequence belongs to the TALE/IRO homeobox family.

It is found in the nucleus. The chain is Iroquois-class homeodomain protein IRX-2 (IRX2) from Homo sapiens (Human).